Here is a 248-residue protein sequence, read N- to C-terminus: NADP-dependent 3-hydroxy acid dehydrogenase YdfG (248 aa).

Residues 7 to 12 (GATAGF), 32 to 33 (RR), 54 to 55 (DV), and Asn-81 each bind NADP(+). Residue Ser-134 coordinates substrate. Residues Tyr-147, Lys-151, and 177 to 185 (PGLVGGTEF) each bind NADP(+). Tyr-147 functions as the Proton acceptor in the catalytic mechanism.

This sequence belongs to the short-chain dehydrogenases/reductases (SDR) family. Homotetramer.

It catalyses the reaction 3-hydroxypropanoate + NADP(+) = 3-oxopropanoate + NADPH + H(+). It carries out the reaction L-allo-threonine + NADP(+) = aminoacetone + CO2 + NADPH. Functionally, NADP-dependent dehydrogenase with broad substrate specificity acting on 3-hydroxy acids. Catalyzes the NADP-dependent oxidation of L-allo-threonine to L-2-amino-3-keto-butyrate, which is spontaneously decarboxylated into aminoacetone. Also acts on D-threonine, L-serine, D-serine, D-3-hydroxyisobutyrate, L-3-hydroxyisobutyrate, D-glycerate and L-glycerate. Able to catalyze the reduction of the malonic semialdehyde to 3-hydroxypropionic acid. YdfG is apparently supplementing RutE, the presumed malonic semialdehyde reductase involved in pyrimidine degradation since both are able to detoxify malonic semialdehyde. In Escherichia coli O6:H1 (strain CFT073 / ATCC 700928 / UPEC), this protein is NADP-dependent 3-hydroxy acid dehydrogenase YdfG.